We begin with the raw amino-acid sequence, 166 residues long: NADPH-dependent 7-cyano-7-deazaguanine reductase (166 aa).

Residue C57 is the Thioimide intermediate of the active site. The active-site Proton donor is the D64. Substrate contacts are provided by residues V79–S81 and H98–E99.

The protein belongs to the GTP cyclohydrolase I family. QueF type 1 subfamily.

Its subcellular location is the cytoplasm. The enzyme catalyses 7-aminomethyl-7-carbaguanine + 2 NADP(+) = 7-cyano-7-deazaguanine + 2 NADPH + 3 H(+). The protein operates within tRNA modification; tRNA-queuosine biosynthesis. Functionally, catalyzes the NADPH-dependent reduction of 7-cyano-7-deazaguanine (preQ0) to 7-aminomethyl-7-deazaguanine (preQ1). This chain is NADPH-dependent 7-cyano-7-deazaguanine reductase, found in Staphylococcus haemolyticus (strain JCSC1435).